The following is a 256-amino-acid chain: Small ribosomal subunit protein eS1 (256 aa).

At Ala-2 the chain carries N-acetylalanine; partial.

The protein belongs to the eukaryotic ribosomal protein eS1 family. Component of the small ribosomal subunit. Mature ribosomes consist of a small (40S) and a large (60S) subunit. The 40S subunit contains about 33 different proteins and 1 molecule of RNA (18S). The 60S subunit contains about 49 different proteins and 3 molecules of RNA (25S, 5.8S and 5S).

It is found in the cytoplasm. The sequence is that of Small ribosomal subunit protein eS1 from Fusarium vanettenii (strain ATCC MYA-4622 / CBS 123669 / FGSC 9596 / NRRL 45880 / 77-13-4) (Fusarium solani subsp. pisi).